The primary structure comprises 466 residues: ATP synthase subunit beta (466 aa).

Residue 155-162 coordinates ATP; sequence GGAGVGKT.

Belongs to the ATPase alpha/beta chains family. As to quaternary structure, F-type ATPases have 2 components, CF(1) - the catalytic core - and CF(0) - the membrane proton channel. CF(1) has five subunits: alpha(3), beta(3), gamma(1), delta(1), epsilon(1). CF(0) has three main subunits: a(1), b(2) and c(9-12). The alpha and beta chains form an alternating ring which encloses part of the gamma chain. CF(1) is attached to CF(0) by a central stalk formed by the gamma and epsilon chains, while a peripheral stalk is formed by the delta and b chains.

The protein resides in the cell inner membrane. The catalysed reaction is ATP + H2O + 4 H(+)(in) = ADP + phosphate + 5 H(+)(out). Its function is as follows. Produces ATP from ADP in the presence of a proton gradient across the membrane. The catalytic sites are hosted primarily by the beta subunits. This chain is ATP synthase subunit beta, found in Bordetella avium (strain 197N).